Here is a 195-residue protein sequence, read N- to C-terminus: Imidazoleglycerol-phosphate dehydratase (195 aa).

This sequence belongs to the imidazoleglycerol-phosphate dehydratase family.

It localises to the cytoplasm. The enzyme catalyses D-erythro-1-(imidazol-4-yl)glycerol 3-phosphate = 3-(imidazol-4-yl)-2-oxopropyl phosphate + H2O. It functions in the pathway amino-acid biosynthesis; L-histidine biosynthesis; L-histidine from 5-phospho-alpha-D-ribose 1-diphosphate: step 6/9. This chain is Imidazoleglycerol-phosphate dehydratase, found in Heliobacterium modesticaldum (strain ATCC 51547 / Ice1).